Here is a 473-residue protein sequence, read N- to C-terminus: NADH-quinone oxidoreductase subunit N (473 aa).

14 helical membrane passes run 3–23, 30–50, 62–82, 99–119, 120–140, 153–173, 195–215, 230–252, 262–282, 291–311, 326–346, 368–388, 408–428, and 444–464; these read LHYL…LVIA, LAFY…CSLL, FSSM…FLWL, FYLL…SEHF, ASFF…IAYS, YLIL…IVYL, MLFT…LSLV, LPTT…WKLF, IVLT…NLLA, ILAF…FLFN, ALLF…SILM, AASL…LGFM, FLVI…MVML, and VASL…PALF.

Belongs to the complex I subunit 2 family. As to quaternary structure, NDH-1 is composed of 13 different subunits. Subunits NuoA, H, J, K, L, M, N constitute the membrane sector of the complex.

It localises to the cell inner membrane. It carries out the reaction a quinone + NADH + 5 H(+)(in) = a quinol + NAD(+) + 4 H(+)(out). Functionally, NDH-1 shuttles electrons from NADH, via FMN and iron-sulfur (Fe-S) centers, to quinones in the respiratory chain. The immediate electron acceptor for the enzyme in this species is believed to be ubiquinone. Couples the redox reaction to proton translocation (for every two electrons transferred, four hydrogen ions are translocated across the cytoplasmic membrane), and thus conserves the redox energy in a proton gradient. This Shewanella woodyi (strain ATCC 51908 / MS32) protein is NADH-quinone oxidoreductase subunit N.